We begin with the raw amino-acid sequence, 510 residues long: Probable serine/threonine-protein kinase 2 (510 aa).

Positions 111–364 (YVLNKKIGKG…ALQALGHQWF (254 aa)) constitute a Protein kinase domain. Residues 117–125 (IGKGSFSTA) and Lys-140 contribute to the ATP site. Residue Asp-230 is the Proton acceptor of the active site. The interval 408 to 428 (NDDIYNNNNNNNQLDPNKNHK) is disordered.

This sequence belongs to the protein kinase superfamily. Ser/Thr protein kinase family.

The protein resides in the membrane. The enzyme catalyses L-seryl-[protein] + ATP = O-phospho-L-seryl-[protein] + ADP + H(+). It catalyses the reaction L-threonyl-[protein] + ATP = O-phospho-L-threonyl-[protein] + ADP + H(+). The protein is Probable serine/threonine-protein kinase 2 (PK2) of Plasmodium falciparum (isolate K1 / Thailand).